We begin with the raw amino-acid sequence, 499 residues long: WASH complex subunit 1 (499 aa).

Disordered stretches follow at residues 317–433 (GPVR…GAVT) and 448–499 (RKGI…DGWN). A compositionally biased stretch (pro residues) spans 333–363 (AAPPPPPPPPPPPPPPPPAQTSAIPSPPPFP). Residues 391-413 (PRSELMAAIRNAGGVHGGRLRSP) enclose the WH2 domain. Acidic residues predominate over residues 490–499 (HSEDDEDGWN). S491 is modified (phosphoserine).

Belongs to the WASH1 family. In terms of assembly, component of the WASH complex. Interacts with spir and capu. Interacts (via N-terminus) with Rho1 (via N-terminus).

Functionally, acts as a nucleation-promoting factor by activating the Arp2/3 complex to induce actin polymerization. Participates in both linear- and branched-actin networks. Functions in linear-filament (bundled F-actin) by acting downstream of Rho1 and regulating actin and microtubule organization during oogenesis. Nucleates actin in an Arp2/3-dependent manner and exhibits F-actin and microtubule bundling and cross-linking activity in the egg chamber. During embryogenesis, acts downstream of Rho1 to activate the Arp2/3 complex which is necessary for the developmental migration of tail hemocytes anteriorly along the ventral midline. Its function in hemocyte transmigration is independent of the WASH complex. May play a role in endosomal sorting; its assembly in the WASH complex may regulate its nucleation-promoting factor (NPF) activity. The polypeptide is WASH complex subunit 1 (Drosophila melanogaster (Fruit fly)).